The sequence spans 351 residues: DNA polymerase IV (351 aa).

Residues 4–185 (IIHVDMDCFF…LPLEKIPGVG (182 aa)) form the UmuC domain. Residues D8 and D103 each coordinate Mg(2+). E104 is a catalytic residue.

Belongs to the DNA polymerase type-Y family. As to quaternary structure, monomer. Mg(2+) serves as cofactor.

The protein resides in the cytoplasm. It carries out the reaction DNA(n) + a 2'-deoxyribonucleoside 5'-triphosphate = DNA(n+1) + diphosphate. Its function is as follows. Poorly processive, error-prone DNA polymerase involved in untargeted mutagenesis. Copies undamaged DNA at stalled replication forks, which arise in vivo from mismatched or misaligned primer ends. These misaligned primers can be extended by PolIV. Exhibits no 3'-5' exonuclease (proofreading) activity. May be involved in translesional synthesis, in conjunction with the beta clamp from PolIII. The protein is DNA polymerase IV of Shigella flexneri.